We begin with the raw amino-acid sequence, 407 residues long: O-antigen polymerase (407 aa).

A run of 11 helical transmembrane segments spans residues leucine 2–valine 22, valine 31–valine 51, tyrosine 63–tyrosine 83, tyrosine 101–methionine 121, tyrosine 141–phenylalanine 161, leucine 168–glycine 185, isoleucine 190–isoleucine 204, phenylalanine 211–tyrosine 231, alanine 319–leucine 339, phenylalanine 356–phenylalanine 376, and isoleucine 382–leucine 402.

Its subcellular location is the cell inner membrane. It catalyses the reaction n lipid-linked O-antigen repeat units = a lipid-linked O antigen + (n-1) polyisoprenyl diphosphate.. The protein operates within bacterial outer membrane biogenesis; LPS O-antigen biosynthesis. Functionally, polymerase involved in the biosynthesis of the lipopolysaccharide (LPS). Catalyzes the polymerization of the O-antigen repeat units on the periplasmic face of the inner membrane, leading to the formation of the lipid-linked O-antigen molecule. The sequence is that of O-antigen polymerase (rfc) from Salmonella typhi.